A 261-amino-acid polypeptide reads, in one-letter code: Cytochrome c oxidase subunit 3 (261 aa).

The Mitochondrial matrix portion of the chain corresponds to 1-15 (MAHQAHAYHMVDPSP). A helical membrane pass occupies residues 16–34 (WPLTGAIGALFLTSGLAIW). Over 35-40 (FHFQSV) the chain is Mitochondrial intermembrane. The chain crosses the membrane as a helical span at residues 41 to 66 (TLLTLGLILLLLTMYQWWRDIIREGT). Residues 67 to 72 (FQGHHT) lie on the Mitochondrial matrix side of the membrane. A helical membrane pass occupies residues 73–105 (PPVQKGLRYGMILFITSEVFFFLGFFWAFYHSS). Residues 106 to 128 (LAPTPELGGCWPPTGITPLDPFE) lie on the Mitochondrial intermembrane side of the membrane. The helical transmembrane segment at 129–152 (VPLLNTAVLLASGVTVTWAHHSLM) threads the bilayer. Over 153–155 (EGA) the chain is Mitochondrial matrix. The chain crosses the membrane as a helical span at residues 156-183 (RKQAIQALALTIILGVYFTALQAMEYYE). The Mitochondrial intermembrane portion of the chain corresponds to 184–190 (APFTIAD). The chain crosses the membrane as a helical span at residues 191-223 (GVYGSTFFVATGFHGLHVIIGSSFLAVCLLRQI). Over 224 to 232 (QYHFTSEHH) the chain is Mitochondrial matrix. A helical transmembrane segment spans residues 233 to 256 (FGFEAAAWYWHFVDVVWLFLYVSI). The Mitochondrial intermembrane segment spans residues 257–261 (YWWGS).

Belongs to the cytochrome c oxidase subunit 3 family. Component of the cytochrome c oxidase (complex IV, CIV), a multisubunit enzyme composed of 14 subunits. The complex is composed of a catalytic core of 3 subunits MT-CO1, MT-CO2 and MT-CO3, encoded in the mitochondrial DNA, and 11 supernumerary subunits COX4I, COX5A, COX5B, COX6A, COX6B, COX6C, COX7A, COX7B, COX7C, COX8 and NDUFA4, which are encoded in the nuclear genome. The complex exists as a monomer or a dimer and forms supercomplexes (SCs) in the inner mitochondrial membrane with NADH-ubiquinone oxidoreductase (complex I, CI) and ubiquinol-cytochrome c oxidoreductase (cytochrome b-c1 complex, complex III, CIII), resulting in different assemblies (supercomplex SCI(1)III(2)IV(1) and megacomplex MCI(2)III(2)IV(2)).

It is found in the mitochondrion inner membrane. It carries out the reaction 4 Fe(II)-[cytochrome c] + O2 + 8 H(+)(in) = 4 Fe(III)-[cytochrome c] + 2 H2O + 4 H(+)(out). Component of the cytochrome c oxidase, the last enzyme in the mitochondrial electron transport chain which drives oxidative phosphorylation. The respiratory chain contains 3 multisubunit complexes succinate dehydrogenase (complex II, CII), ubiquinol-cytochrome c oxidoreductase (cytochrome b-c1 complex, complex III, CIII) and cytochrome c oxidase (complex IV, CIV), that cooperate to transfer electrons derived from NADH and succinate to molecular oxygen, creating an electrochemical gradient over the inner membrane that drives transmembrane transport and the ATP synthase. Cytochrome c oxidase is the component of the respiratory chain that catalyzes the reduction of oxygen to water. Electrons originating from reduced cytochrome c in the intermembrane space (IMS) are transferred via the dinuclear copper A center (CU(A)) of subunit 2 and heme A of subunit 1 to the active site in subunit 1, a binuclear center (BNC) formed by heme A3 and copper B (CU(B)). The BNC reduces molecular oxygen to 2 water molecules using 4 electrons from cytochrome c in the IMS and 4 protons from the mitochondrial matrix. The sequence is that of Cytochrome c oxidase subunit 3 (mt-co3) from Formosania lacustris (Oriental stream loach).